Here is a 477-residue protein sequence, read N- to C-terminus: Glycogen synthase (477 aa).

Residue Lys15 coordinates ADP-alpha-D-glucose.

It belongs to the glycosyltransferase 1 family. Bacterial/plant glycogen synthase subfamily.

It carries out the reaction [(1-&gt;4)-alpha-D-glucosyl](n) + ADP-alpha-D-glucose = [(1-&gt;4)-alpha-D-glucosyl](n+1) + ADP + H(+). It participates in glycan biosynthesis; glycogen biosynthesis. Its function is as follows. Synthesizes alpha-1,4-glucan chains using ADP-glucose. The chain is Glycogen synthase from Klebsiella pneumoniae (strain 342).